A 291-amino-acid polypeptide reads, in one-letter code: U3 small nucleolar ribonucleoprotein protein IMP4 (291 aa).

The region spanning 83-264 (PKVMITTSRD…LYMIRLGTLE (182 aa)) is the Brix domain.

In terms of assembly, part of the small subunit (SSU) processome, composed of more than 70 proteins and the RNA chaperone small nucleolar RNA (snoRNA) U3. Component of a heterotrimeric complex containing IMP3, IMP4 and MPHOSPH10. Interacts with MPHOSPH10.

Its subcellular location is the nucleus. It is found in the nucleolus. Its function is as follows. Component of the 60-80S U3 small nucleolar ribonucleoprotein (U3 snoRNP). Required for the early cleavages during pre-18S ribosomal RNA processing. Part of the small subunit (SSU) processome, first precursor of the small eukaryotic ribosomal subunit. During the assembly of the SSU processome in the nucleolus, many ribosome biogenesis factors, an RNA chaperone and ribosomal proteins associate with the nascent pre-rRNA and work in concert to generate RNA folding, modifications, rearrangements and cleavage as well as targeted degradation of pre-ribosomal RNA by the RNA exosome. The polypeptide is U3 small nucleolar ribonucleoprotein protein IMP4 (Homo sapiens (Human)).